A 376-amino-acid chain; its full sequence is Glutamate 5-kinase (376 aa).

Residue Lys10 participates in ATP binding. Substrate is bound by residues Ser50, Asp137, and Asn149. An ATP-binding site is contributed by 169-170 (TD). The region spanning 275–353 (RGRLVLDAGA…AEIAGVLGFM (79 aa)) is the PUA domain.

Belongs to the glutamate 5-kinase family.

It is found in the cytoplasm. It catalyses the reaction L-glutamate + ATP = L-glutamyl 5-phosphate + ADP. The protein operates within amino-acid biosynthesis; L-proline biosynthesis; L-glutamate 5-semialdehyde from L-glutamate: step 1/2. Catalyzes the transfer of a phosphate group to glutamate to form L-glutamate 5-phosphate. The polypeptide is Glutamate 5-kinase (Alcanivorax borkumensis (strain ATCC 700651 / DSM 11573 / NCIMB 13689 / SK2)).